Here is a 214-residue protein sequence, read N- to C-terminus: Threonylcarbamoyl-AMP synthase (214 aa).

The YrdC-like domain maps to 9–214 (TDSTIQAATW…GDALTGQVIR (206 aa)).

The protein belongs to the SUA5 family. TsaC subfamily.

The protein localises to the cytoplasm. It catalyses the reaction L-threonine + hydrogencarbonate + ATP = L-threonylcarbamoyladenylate + diphosphate + H2O. Functionally, required for the formation of a threonylcarbamoyl group on adenosine at position 37 (t(6)A37) in tRNAs that read codons beginning with adenine. Catalyzes the conversion of L-threonine, HCO(3)(-)/CO(2) and ATP to give threonylcarbamoyl-AMP (TC-AMP) as the acyladenylate intermediate, with the release of diphosphate. The chain is Threonylcarbamoyl-AMP synthase from Psychrobacter cryohalolentis (strain ATCC BAA-1226 / DSM 17306 / VKM B-2378 / K5).